The primary structure comprises 235 residues: Large ribosomal subunit protein uL1 (235 aa).

It belongs to the universal ribosomal protein uL1 family. As to quaternary structure, part of the 50S ribosomal subunit.

Its function is as follows. Binds directly to 23S rRNA. The L1 stalk is quite mobile in the ribosome, and is involved in E site tRNA release. Protein L1 is also a translational repressor protein, it controls the translation of the L11 operon by binding to its mRNA. The protein is Large ribosomal subunit protein uL1 of Prochlorococcus marinus (strain AS9601).